The chain runs to 335 residues: Tetraacyldisaccharide 4'-kinase (335 aa).

An ATP-binding site is contributed by 51–58; that stretch reads HVGGAGKT.

Belongs to the LpxK family.

The enzyme catalyses a lipid A disaccharide + ATP = a lipid IVA + ADP + H(+). The protein operates within glycolipid biosynthesis; lipid IV(A) biosynthesis; lipid IV(A) from (3R)-3-hydroxytetradecanoyl-[acyl-carrier-protein] and UDP-N-acetyl-alpha-D-glucosamine: step 6/6. Its function is as follows. Transfers the gamma-phosphate of ATP to the 4'-position of a tetraacyldisaccharide 1-phosphate intermediate (termed DS-1-P) to form tetraacyldisaccharide 1,4'-bis-phosphate (lipid IVA). The sequence is that of Tetraacyldisaccharide 4'-kinase from Nitrobacter hamburgensis (strain DSM 10229 / NCIMB 13809 / X14).